A 214-amino-acid chain; its full sequence is MNASPAERMKALRVSRETLDKLEHFAGLFQKWAKSINLVAPSTLEDLWQRHFVDSLQVFRLSPFPKTWVDLGSGGGFPGVITAICLSEHADGWVHLVESNNKKAAFLRVALNETGARGSVHPIRVEQAPSVIPRCEAISARALADLTQLLDYSAPWMLADGSNTIAFFHKGRDYQQEVDKAVSRFQFDLVKHASVVEQDSVVLEIANLSRRTKC.

S-adenosyl-L-methionine is bound by residues Gly-72, Phe-77, Val-125–Glu-126, and Arg-141.

Belongs to the methyltransferase superfamily. RNA methyltransferase RsmG family.

The protein localises to the cytoplasm. It catalyses the reaction guanosine(527) in 16S rRNA + S-adenosyl-L-methionine = N(7)-methylguanosine(527) in 16S rRNA + S-adenosyl-L-homocysteine. Functionally, specifically methylates the N7 position of guanine in position 527 of 16S rRNA. The polypeptide is Ribosomal RNA small subunit methyltransferase G (Sinorhizobium fredii (strain NBRC 101917 / NGR234)).